The primary structure comprises 347 residues: Protein RecA (347 aa).

Position 65 to 72 (65 to 72) interacts with ATP; the sequence is GPESSGKT. Residues 327 to 336 show a composition bias toward basic and acidic residues; that stretch reads KFEPTELSRE. The segment at 327-347 is disordered; the sequence is KFEPTELSREEGDEDTLEDAM. Residues 337 to 347 are compositionally biased toward acidic residues; that stretch reads EGDEDTLEDAM.

Belongs to the RecA family.

It localises to the cytoplasm. Its function is as follows. Can catalyze the hydrolysis of ATP in the presence of single-stranded DNA, the ATP-dependent uptake of single-stranded DNA by duplex DNA, and the ATP-dependent hybridization of homologous single-stranded DNAs. It interacts with LexA causing its activation and leading to its autocatalytic cleavage. This Xylella fastidiosa (strain M12) protein is Protein RecA.